The following is a 299-amino-acid chain: Cycloserine biosynthesis protein DcsG (299 aa).

Residues lysine 92, lysine 137, serine 144, glutamine 175, proline 176, and valine 178 each coordinate ATP. The 204-residue stretch at 95–298 (LADLAAHGVP…FAQALAERLK (204 aa)) folds into the ATP-grasp domain. Active-site residues include arginine 220 and arginine 254. Residues glutamate 269 and glutamate 271 each coordinate Mg(2+). Residue glutamate 271 is part of the active site.

As to quaternary structure, monomer. The cofactor is Mg(2+).

The catalysed reaction is O-ureido-D-serine + ATP + H2O + H(+) = D-cycloserine + NH4(+) + ADP + phosphate + CO2. Its function is as follows. Involved in the biosynthesis of the antibiotic D-cycloserine (DCS), a cyclic structural analog of D-alanine, used as an antitubercular agent. Catalyzes the synthesis of D-cycloserine from O-ureido-D-serine (D-OUS). It reacts with D-OUS, D-homocysteine and beta-aminooxy-D-alanine. The chain is Cycloserine biosynthesis protein DcsG from Streptomyces lavendulae.